Reading from the N-terminus, the 700-residue chain is ATP-dependent zinc metalloprotease FtsH (700 aa).

Residues 1-10 (MNNNKGGFLR) are Cytoplasmic-facing. The helical transmembrane segment at 11-31 (SSVFYIFIFLAVVGMVYGLFG) threads the bilayer. Topologically, residues 32–130 (NDKTTTKTIT…LVTKQAENSG (99 aa)) are extracellular. Residues 131 to 151 (FWLNLLVSLVPVLLIVAVFYL) traverse the membrane as a helical segment. Topologically, residues 152-700 (MMNQAGGGKG…ETDDNNTENK (549 aa)) are cytoplasmic. An ATP-binding site is contributed by 227-234 (GPPGTGKT). A Zn(2+)-binding site is contributed by His-449. Residue Glu-450 is part of the active site. Residues His-453 and Asp-525 each contribute to the Zn(2+) site. Residues 644–700 (KSFEEAKAAADAKDSQAEQRFEKQDEEKSSDDHSESKNEDTDSTDKSETDDNNTENK) form a disordered region.

The protein in the central section; belongs to the AAA ATPase family. In the C-terminal section; belongs to the peptidase M41 family. As to quaternary structure, homohexamer. Zn(2+) serves as cofactor.

It is found in the cell membrane. In terms of biological role, acts as a processive, ATP-dependent zinc metallopeptidase for both cytoplasmic and membrane proteins. Plays a role in the quality control of integral membrane proteins. This Leuconostoc mesenteroides subsp. mesenteroides (strain ATCC 8293 / DSM 20343 / BCRC 11652 / CCM 1803 / JCM 6124 / NCDO 523 / NBRC 100496 / NCIMB 8023 / NCTC 12954 / NRRL B-1118 / 37Y) protein is ATP-dependent zinc metalloprotease FtsH.